Here is a 459-residue protein sequence, read N- to C-terminus: 4,4'-diaponeurosporen-aldehyde dehydrogenase (459 aa).

NAD(+)-binding positions include 114–115 (FN) and 188–189 (GS). The Proton acceptor role is filled by Glu210. Residue Met211 coordinates NAD(+). Cys244 (nucleophile) is an active-site residue. Residue Glu336 coordinates NAD(+).

The protein belongs to the aldehyde dehydrogenase family.

It carries out the reaction 4,4'-diaponeurosporenal + NAD(+) + H2O = 4,4'-diaponeurosporenoate + NADH + 2 H(+). It participates in carotenoid biosynthesis; staphyloxanthin biosynthesis; staphyloxanthin from farnesyl diphosphate. Its function is as follows. Involved in the biosynthesis of the yellow-orange carotenoid staphyloxanthin, which plays a role in the virulence via its protective function against oxidative stress. Catalyzes the oxidation of 4,4'-diaponeurosporen-4-al to yield 4,4'-diaponeurosporenoic acid. The sequence is that of 4,4'-diaponeurosporen-aldehyde dehydrogenase from Staphylococcus aureus (strain NCTC 8325 / PS 47).